The chain runs to 561 residues: MGLGLLQIGLTLCIVIAITPVLGRYIARVFLEERTILDPLMNPIERSIYVISGVRPKDDMTGWQYIRAILYTNLFMGILVYSLIHYQRLLPWNPNGFGVPRWDIILHTVVSFVTNTDQQHYAGETTLSYFSQVAALGFLMFTSAATGLAVGIAFIRGLTGKKLGNFYIDLTRGITRILLPISVIGAIALVLLGVPQTLGGSLTITTLEGGTQYIARGPVASFEMIKMLGENGGGFFAANSAHPFENPNGATNFIETIAMIAIPAAMIYTYGVFAKNIKQAWLLFWMVFIVFVILVWVAATGELQGNPLVNGTLGIEKPNLEGKELRFGWAETALWAVMTTATMCGAVNGMHDALMPQGLFATLFNLFLQIIWGGQGTGTAYLFIYLILTVFLTGLMVGRTPEIFGRKIEKREIVLASLILLVHPIVVLIPSAIALAYPYSLSGITNPGFHGISQVVYEYASASSNNGSGLEGLTDNSLWWNLSTSLSILVGRYVPIIAMLLLADSMSRKQTVPQTPGTLKTDSLLFTTVTAGIVLILGVLTFFPVLALGPIAEAFKLASGS.

A run of 12 helical transmembrane segments spans residues 2–22 (GLGL…TPVL), 65–85 (YIRA…SLIH), 135–155 (ALGF…IAFI), 177–197 (ILLP…VPQT), 253–273 (FIET…YGVF), 280–300 (AWLL…VAAT), 327–347 (FGWA…CGAV), 353–373 (ALMP…IIWG), 378–398 (GTAY…LMVG), 413–433 (IVLA…PSAI), 482–502 (LSTS…MLLL), and 531–551 (AGIV…LGPI).

This sequence belongs to the KdpA family. In terms of assembly, the system is composed of three essential subunits: KdpA, KdpB and KdpC.

The protein localises to the cell membrane. Its function is as follows. Part of the high-affinity ATP-driven potassium transport (or Kdp) system, which catalyzes the hydrolysis of ATP coupled with the electrogenic transport of potassium into the cytoplasm. This subunit binds the extracellular potassium ions and delivers the ions to the membrane domain of KdpB through an intramembrane tunnel. In Anabaena sp. (strain L31), this protein is Potassium-transporting ATPase potassium-binding subunit.